Consider the following 244-residue polypeptide: NAD(P)H-quinone oxidoreductase subunit K (244 aa).

[4Fe-4S] cluster is bound by residues cysteine 51, cysteine 52, cysteine 116, and cysteine 147.

Belongs to the complex I 20 kDa subunit family. As to quaternary structure, NDH-1 can be composed of about 15 different subunits; different subcomplexes with different compositions have been identified which probably have different functions. It depends on [4Fe-4S] cluster as a cofactor.

The protein localises to the cellular thylakoid membrane. The enzyme catalyses a plastoquinone + NADH + (n+1) H(+)(in) = a plastoquinol + NAD(+) + n H(+)(out). It catalyses the reaction a plastoquinone + NADPH + (n+1) H(+)(in) = a plastoquinol + NADP(+) + n H(+)(out). In terms of biological role, NDH-1 shuttles electrons from an unknown electron donor, via FMN and iron-sulfur (Fe-S) centers, to quinones in the respiratory and/or the photosynthetic chain. The immediate electron acceptor for the enzyme in this species is believed to be plastoquinone. Couples the redox reaction to proton translocation, and thus conserves the redox energy in a proton gradient. Cyanobacterial NDH-1 also plays a role in inorganic carbon-concentration. In Synechococcus sp. (strain JA-2-3B'a(2-13)) (Cyanobacteria bacterium Yellowstone B-Prime), this protein is NAD(P)H-quinone oxidoreductase subunit K.